The sequence spans 40 residues: Alpha-1B-glycoprotein (40 aa).

N23 carries an N-linked (GlcNAc...) asparagine glycan.

As to quaternary structure, interacts with CRISP3. Plasma.

It localises to the secreted. This Sus scrofa (Pig) protein is Alpha-1B-glycoprotein (A1BG).